The sequence spans 353 residues: 3-dehydroquinate synthase (353 aa).

NAD(+) contacts are provided by residues 62 to 67 (DGEQYK), 96 to 100 (GVIGD), 120 to 121 (TT), Lys-133, and Lys-142. Residues Glu-175, His-236, and His-253 each contribute to the Zn(2+) site.

This sequence belongs to the sugar phosphate cyclases superfamily. Dehydroquinate synthase family. It depends on NAD(+) as a cofactor. Co(2+) serves as cofactor. Zn(2+) is required as a cofactor.

It localises to the cytoplasm. The enzyme catalyses 7-phospho-2-dehydro-3-deoxy-D-arabino-heptonate = 3-dehydroquinate + phosphate. The protein operates within metabolic intermediate biosynthesis; chorismate biosynthesis; chorismate from D-erythrose 4-phosphate and phosphoenolpyruvate: step 2/7. Functionally, catalyzes the conversion of 3-deoxy-D-arabino-heptulosonate 7-phosphate (DAHP) to dehydroquinate (DHQ). This chain is 3-dehydroquinate synthase, found in Helicobacter hepaticus (strain ATCC 51449 / 3B1).